A 130-amino-acid polypeptide reads, in one-letter code: Small ribosomal subunit protein uS11 (130 aa).

Belongs to the universal ribosomal protein uS11 family. In terms of assembly, part of the 30S ribosomal subunit. Interacts with proteins S7 and S18. Binds to IF-3.

Its function is as follows. Located on the platform of the 30S subunit, it bridges several disparate RNA helices of the 16S rRNA. Forms part of the Shine-Dalgarno cleft in the 70S ribosome. This Caldanaerobacter subterraneus subsp. tengcongensis (strain DSM 15242 / JCM 11007 / NBRC 100824 / MB4) (Thermoanaerobacter tengcongensis) protein is Small ribosomal subunit protein uS11.